The sequence spans 30 residues: Large ribosomal subunit protein bL25 (30 aa).

This sequence belongs to the bacterial ribosomal protein bL25 family. In terms of assembly, part of the 50S ribosomal subunit; part of the 5S rRNA/L5/L18/L25 subcomplex. Contacts the 5S rRNA. Binds to the 5S rRNA independently of L5 and L18.

Its function is as follows. This is one of the proteins that binds to the 5S RNA in the ribosome where it forms part of the central protuberance. This is Large ribosomal subunit protein bL25 (rplY) from Anabaena variabilis.